The following is a 422-amino-acid chain: S-adenosylmethionine synthase (422 aa).

Histidine 15 contacts ATP. Aspartate 17 is a Mg(2+) binding site. Position 43 (glutamate 43) interacts with K(+). 2 residues coordinate L-methionine: glutamate 56 and glutamine 99. Residues 99–109 form a flexible loop region; it reads QSPDISRGVTE. Residues 166–168, 232–233, aspartate 241, 247–248, alanine 264, and lysine 268 each bind ATP; these read DGK, RF, and RK. Aspartate 241 lines the L-methionine pocket. Lysine 272 provides a ligand contact to L-methionine. The tract at residues 390–422 is disordered; the sequence is AVPATTNGAGSKNGSGSKKEPKRKGKKETGAQA.

It belongs to the AdoMet synthase family. Homotetramer; dimer of dimers. It depends on Mg(2+) as a cofactor. Requires K(+) as cofactor.

Its subcellular location is the cytoplasm. It carries out the reaction L-methionine + ATP + H2O = S-adenosyl-L-methionine + phosphate + diphosphate. It participates in amino-acid biosynthesis; S-adenosyl-L-methionine biosynthesis; S-adenosyl-L-methionine from L-methionine: step 1/1. Catalyzes the formation of S-adenosylmethionine (AdoMet) from methionine and ATP. The overall synthetic reaction is composed of two sequential steps, AdoMet formation and the subsequent tripolyphosphate hydrolysis which occurs prior to release of AdoMet from the enzyme. The protein is S-adenosylmethionine synthase of Sorangium cellulosum (strain So ce56) (Polyangium cellulosum (strain So ce56)).